Here is a 152-residue protein sequence, read N- to C-terminus: Interleukin-2 (152 aa).

An N-terminal signal peptide occupies residues 1-20 (MYRMQLLSCIALTLALVANG). O-linked (GalNAc...) threonine glycosylation is present at threonine 23. Cysteine 78 and cysteine 126 are joined by a disulfide.

Belongs to the IL-2 family.

It localises to the secreted. Cytokine produced by activated CD4-positive helper T-cells and to a lesser extend activated CD8-positive T-cells and natural killer (NK) cells that plays pivotal roles in the immune response and tolerance. Binds to a receptor complex composed of either the high-affinity trimeric IL-2R (IL2RA/CD25, IL2RB/CD122 and IL2RG/CD132) or the low-affinity dimeric IL-2R (IL2RB and IL2RG). Interaction with the receptor leads to oligomerization and conformation changes in the IL-2R subunits resulting in downstream signaling starting with phosphorylation of JAK1 and JAK3. In turn, JAK1 and JAK3 phosphorylate the receptor to form a docking site leading to the phosphorylation of several substrates including STAT5. This process leads to activation of several pathways including STAT, phosphoinositide-3-kinase/PI3K and mitogen-activated protein kinase/MAPK pathways. Functions as a T-cell growth factor and can increase NK-cell cytolytic activity as well. Promotes strong proliferation of activated B-cells and subsequently immunoglobulin production. Plays a pivotal role in regulating the adaptive immune system by controlling the survival and proliferation of regulatory T-cells, which are required for the maintenance of immune tolerance. Moreover, participates in the differentiation and homeostasis of effector T-cell subsets, including Th1, Th2, Th17 as well as memory CD8-positive T-cells. The sequence is that of Interleukin-2 (IL2) from Orcinus orca (Killer whale).